The following is a 276-amino-acid chain: CTD small phosphatase-like protein (276 aa).

The segment at 1-25 (MDGPAIITQVTNPKEDEGRLPGAGE) is disordered. The 159-residue stretch at 102 to 260 (LDYGKKCVVI…LDLIPFFEGL (159 aa)) folds into the FCP1 homology domain. D112 (4-aspartylphosphate intermediate) is an active-site residue. The Mg(2+) site is built by D112, D114, and N223. The Proton donor role is filled by D114.

In terms of assembly, interacts with REST. Monomer. It depends on Mg(2+) as a cofactor. Expression is restricted to non-neuronal tissues.

It localises to the nucleus. The enzyme catalyses O-phospho-L-seryl-[protein] + H2O = L-seryl-[protein] + phosphate. The catalysed reaction is O-phospho-L-threonyl-[protein] + H2O = L-threonyl-[protein] + phosphate. Recruited by REST to neuronal genes that contain RE-1 elements, leading to neuronal gene silencing in non-neuronal cells. Preferentially catalyzes the dephosphorylation of 'Ser-5' within the tandem 7 residue repeats in the C-terminal domain (CTD) of the largest RNA polymerase II subunit POLR2A. Negatively regulates RNA polymerase II transcription, possibly by controlling the transition from initiation/capping to processive transcript elongation. The sequence is that of CTD small phosphatase-like protein (CTDSPL) from Homo sapiens (Human).